The primary structure comprises 288 residues: Oxaloacetate decarboxylase (288 aa).

A substrate-binding site is contributed by S47. Mg(2+) is bound at residue D85. 2 residues coordinate substrate: R156 and H232.

It belongs to the isocitrate lyase/PEP mutase superfamily. Oxaloacetate decarboxylase family. As to quaternary structure, homotetramer; dimer of dimers. Mg(2+) serves as cofactor.

The catalysed reaction is oxaloacetate + H(+) = pyruvate + CO2. In terms of biological role, catalyzes the decarboxylation of oxaloacetate into pyruvate. Seems to play a role in maintaining cellular concentrations of bicarbonate and pyruvate. This Bradyrhizobium diazoefficiens (strain JCM 10833 / BCRC 13528 / IAM 13628 / NBRC 14792 / USDA 110) protein is Oxaloacetate decarboxylase.